The chain runs to 190 residues: Peptidyl-tRNA hydrolase (190 aa).

Residue Y17 participates in tRNA binding. Catalysis depends on H22, which acts as the Proton acceptor. TRNA is bound by residues Y67 and N69.

Belongs to the PTH family. Monomer.

The protein resides in the cytoplasm. The enzyme catalyses an N-acyl-L-alpha-aminoacyl-tRNA + H2O = an N-acyl-L-amino acid + a tRNA + H(+). In terms of biological role, hydrolyzes ribosome-free peptidyl-tRNAs (with 1 or more amino acids incorporated), which drop off the ribosome during protein synthesis, or as a result of ribosome stalling. Catalyzes the release of premature peptidyl moieties from peptidyl-tRNA molecules trapped in stalled 50S ribosomal subunits, and thus maintains levels of free tRNAs and 50S ribosomes. This Moorella thermoacetica (strain ATCC 39073 / JCM 9320) protein is Peptidyl-tRNA hydrolase.